We begin with the raw amino-acid sequence, 303 residues long: Phospholipase A1 2 (303 aa).

Residues Cys-6 and Cys-90 are joined by a disulfide bond. The active-site Nucleophile is the Ser-140. The Charge relay system role is filled by Asp-168. A disulfide bridge connects residues Cys-179 and Cys-184. His-232 (charge relay system) is an active-site residue. 3 disulfides stabilise this stretch: Cys-247–Cys-271, Cys-248–Cys-296, and Cys-264–Cys-269.

The protein belongs to the AB hydrolase superfamily. Lipase family. Expressed by the venom gland.

It is found in the secreted. It catalyses the reaction a 1,2-diacyl-sn-glycero-3-phosphocholine + H2O = a 2-acyl-sn-glycero-3-phosphocholine + a fatty acid + H(+). Catalyzes the hydrolysis of phosphatidylcholine with phospholipase A1 activity. May act as an allergen and induce hemolytic activity. This Dolichovespula maculata (Bald-faced hornet) protein is Phospholipase A1 2.